The chain runs to 90 residues: U7-theraphotoxin-Hhn1g (90 aa).

The signal sequence occupies residues 1 to 19; it reads MKTAIFTVVLALAVFAVLS. A propeptide spanning residues 20 to 50 is cleaved from the precursor; sequence FGWEANEKALSEEFTELIHEKEAASETEARE. 3 disulfides stabilise this stretch: Cys51-Cys65, Cys58-Cys70, and Cys64-Cys81.

The protein belongs to the neurotoxin 10 (Hwtx-1) family. 13 (Hntx-13) subfamily. In terms of tissue distribution, expressed by the venom gland.

The protein resides in the secreted. Its function is as follows. Ion channel inhibitor. The protein is U7-theraphotoxin-Hhn1g of Cyriopagopus hainanus (Chinese bird spider).